Here is a 336-residue protein sequence, read N- to C-terminus: tRNA N6-adenosine threonylcarbamoyltransferase (336 aa).

Fe cation-binding residues include H114 and H118. Residues 136 to 140, D169, G182, D186, and N275 contribute to the substrate site; that span reads LVSGG. D301 is a binding site for Fe cation.

It belongs to the KAE1 / TsaD family. Fe(2+) serves as cofactor.

The protein localises to the cytoplasm. It carries out the reaction L-threonylcarbamoyladenylate + adenosine(37) in tRNA = N(6)-L-threonylcarbamoyladenosine(37) in tRNA + AMP + H(+). Its function is as follows. Required for the formation of a threonylcarbamoyl group on adenosine at position 37 (t(6)A37) in tRNAs that read codons beginning with adenine. Is involved in the transfer of the threonylcarbamoyl moiety of threonylcarbamoyl-AMP (TC-AMP) to the N6 group of A37, together with TsaE and TsaB. TsaD likely plays a direct catalytic role in this reaction. This chain is tRNA N6-adenosine threonylcarbamoyltransferase, found in Streptococcus pneumoniae serotype 2 (strain D39 / NCTC 7466).